The sequence spans 433 residues: Trigger factor (433 aa).

The PPIase FKBP-type domain maps to 165–250; sequence GDSAIIDFEG…LHNIQEKVKV (86 aa).

The protein belongs to the FKBP-type PPIase family. Tig subfamily.

The protein resides in the cytoplasm. The catalysed reaction is [protein]-peptidylproline (omega=180) = [protein]-peptidylproline (omega=0). In terms of biological role, involved in protein export. Acts as a chaperone by maintaining the newly synthesized protein in an open conformation. Functions as a peptidyl-prolyl cis-trans isomerase. The protein is Trigger factor of Sulfurimonas denitrificans (strain ATCC 33889 / DSM 1251) (Thiomicrospira denitrificans (strain ATCC 33889 / DSM 1251)).